Reading from the N-terminus, the 516-residue chain is D-alanine--D-alanyl carrier protein ligase (516 aa).

156–157 lines the ATP pocket; sequence TS. Residue Asp-203 participates in D-alanine binding. 298–303 is an ATP binding site; that stretch reads NAYGPT. D-alanine is bound at residue Val-307. ATP contacts are provided by residues Asp-389, 401–404, and Lys-503; that span reads YGGR. Residue Lys-503 coordinates D-alanine.

It belongs to the ATP-dependent AMP-binding enzyme family. DltA subfamily.

The protein resides in the cytoplasm. The enzyme catalyses holo-[D-alanyl-carrier protein] + D-alanine + ATP = D-alanyl-[D-alanyl-carrier protein] + AMP + diphosphate. It participates in cell wall biogenesis; lipoteichoic acid biosynthesis. In terms of biological role, catalyzes the first step in the D-alanylation of lipoteichoic acid (LTA), the activation of D-alanine and its transfer onto the D-alanyl carrier protein (Dcp) DltC. In an ATP-dependent two-step reaction, forms a high energy D-alanyl-AMP intermediate, followed by transfer of the D-alanyl residue as a thiol ester to the phosphopantheinyl prosthetic group of the Dcp. D-alanylation of LTA plays an important role in modulating the properties of the cell wall in Gram-positive bacteria, influencing the net charge of the cell wall. This Streptococcus pneumoniae serotype 4 (strain ATCC BAA-334 / TIGR4) protein is D-alanine--D-alanyl carrier protein ligase.